We begin with the raw amino-acid sequence, 484 residues long: tRNA-2-methylthio-N(6)-dimethylallyladenosine synthase (484 aa).

Positions 36-153 (GKLYIKTHGC…LPELIRARRE (118 aa)) constitute an MTTase N-terminal domain. The [4Fe-4S] cluster site is built by Cys-45, Cys-82, Cys-116, Cys-190, Cys-194, and Cys-197. Positions 176–415 (RAEGPSAFVS…HINAHAASIS (240 aa)) constitute a Radical SAM core domain. The 64-residue stretch at 416 to 479 (QSMVGSVQRV…SNSLRGRIQL (64 aa)) folds into the TRAM domain. Residues 428-450 (EGPSRRDPNELTGKSENMRPVNF) are disordered.

The protein belongs to the methylthiotransferase family. MiaB subfamily. Monomer. The cofactor is [4Fe-4S] cluster.

It is found in the cytoplasm. It carries out the reaction N(6)-dimethylallyladenosine(37) in tRNA + (sulfur carrier)-SH + AH2 + 2 S-adenosyl-L-methionine = 2-methylsulfanyl-N(6)-dimethylallyladenosine(37) in tRNA + (sulfur carrier)-H + 5'-deoxyadenosine + L-methionine + A + S-adenosyl-L-homocysteine + 2 H(+). Functionally, catalyzes the methylthiolation of N6-(dimethylallyl)adenosine (i(6)A), leading to the formation of 2-methylthio-N6-(dimethylallyl)adenosine (ms(2)i(6)A) at position 37 in tRNAs that read codons beginning with uridine. The protein is tRNA-2-methylthio-N(6)-dimethylallyladenosine synthase of Xanthomonas euvesicatoria pv. vesicatoria (strain 85-10) (Xanthomonas campestris pv. vesicatoria).